Consider the following 57-residue polypeptide: uncharacterized protein (57 aa).

Residues 12 to 34 (VIAVLSLFVFAVAVFFVGMALLT) traverse the membrane as a helical segment.

The protein resides in the membrane. This is an uncharacterized protein from Pasteurella multocida (strain Pm70).